A 765-amino-acid polypeptide reads, in one-letter code: E3 ubiquitin-protein ligase SlrP (765 aa).

An interaction with target proteins region spans residues 1 to 453 (MFNITNIQST…YQGPRVLFAM (453 aa)). LRR repeat units lie at residues 200–219 (QITTLILDNNELKSLPENLQ), 221–242 (NIKTLYANSNQLTSIPATLPDT), 243–262 (IQEMELSINRITELPERLPS), 263–284 (ALQSLDLFHNKISCLPENLPEE), 285–305 (LRYLSVYDNSIRTLPAHLPSE), 306–325 (ITHLNVQSNSLTALPETLPP), 326–346 (GLKTLEAGENALTSLPASLPP), 347–368 (ELQVLDVSKNQITVLPETLPPT), 369–389 (ITTLDVSRNALTNLPENLPAA), and 390–410 (LQIMQASRNNLVRLPESLPHF). Residues 454–461 (GDFSIVRV) form a linker region. An E3 ubiquitin-protein ligase catalytic domain region spans residues 462 to 765 (TRPLHQAVQG…VSSLMSAYWR (304 aa)). The 295-residue stretch at 464 to 758 (PLHQAVQGWL…NILLKKEVSS (295 aa)) folds into the NEL domain. Residue Cys-546 is the Glycyl thioester intermediate of the active site.

The protein belongs to the LRR-containing bacterial E3 ligase family. In terms of assembly, interacts with host TXN. In terms of processing, ubiquitinated in the presence of host E1 ubiquitin-activating enzyme, E2 ubiquitin-conjugating enzyme and ubiquitin.

It is found in the secreted. The protein resides in the host cytoplasm. The enzyme catalyses S-ubiquitinyl-[E2 ubiquitin-conjugating enzyme]-L-cysteine + [acceptor protein]-L-lysine = [E2 ubiquitin-conjugating enzyme]-L-cysteine + N(6)-ubiquitinyl-[acceptor protein]-L-lysine.. In terms of biological role, effector proteins function to alter host cell physiology and promote bacterial survival in host tissues. This protein is an E3 ubiquitin ligase that interferes with host's ubiquitination pathway. Can ubiquitinate both ubiquitin and host TXN (thioredoxin). Leads to significant decrease of thioredoxin activity and increase of host cell death. The polypeptide is E3 ubiquitin-protein ligase SlrP (slrP) (Salmonella typhimurium (strain 14028s / SGSC 2262)).